The chain runs to 235 residues: Large ribosomal subunit protein uL1 (235 aa).

The protein belongs to the universal ribosomal protein uL1 family. In terms of assembly, part of the 50S ribosomal subunit.

Functionally, binds directly to 23S rRNA. The L1 stalk is quite mobile in the ribosome, and is involved in E site tRNA release. Its function is as follows. Protein L1 is also a translational repressor protein, it controls the translation of the L11 operon by binding to its mRNA. The chain is Large ribosomal subunit protein uL1 from Solidesulfovibrio magneticus (strain ATCC 700980 / DSM 13731 / RS-1) (Desulfovibrio magneticus).